The primary structure comprises 131 residues: D-ribose pyranase (131 aa).

His-20 acts as the Proton donor in catalysis. Residues Asp-28, His-98, and 120-122 (YAN) contribute to the substrate site.

It belongs to the RbsD / FucU family. RbsD subfamily. In terms of assembly, homodecamer.

The protein localises to the cytoplasm. The catalysed reaction is beta-D-ribopyranose = beta-D-ribofuranose. It participates in carbohydrate metabolism; D-ribose degradation; D-ribose 5-phosphate from beta-D-ribopyranose: step 1/2. In terms of biological role, catalyzes the interconversion of beta-pyran and beta-furan forms of D-ribose. The polypeptide is D-ribose pyranase (Bacillus cereus (strain ATCC 14579 / DSM 31 / CCUG 7414 / JCM 2152 / NBRC 15305 / NCIMB 9373 / NCTC 2599 / NRRL B-3711)).